The sequence spans 288 residues: Elongation factor Ts (288 aa).

Residues 80–83 (TDFL) are involved in Mg(2+) ion dislocation from EF-Tu.

This sequence belongs to the EF-Ts family.

It localises to the cytoplasm. Functionally, associates with the EF-Tu.GDP complex and induces the exchange of GDP to GTP. It remains bound to the aminoacyl-tRNA.EF-Tu.GTP complex up to the GTP hydrolysis stage on the ribosome. This Pseudomonas fluorescens (strain ATCC BAA-477 / NRRL B-23932 / Pf-5) protein is Elongation factor Ts.